Reading from the N-terminus, the 272-residue chain is Shikimate dehydrogenase (NADP(+)) (272 aa).

Residues 14–16 and threonine 61 each bind shikimate; that span reads SKS. Lysine 65 acts as the Proton acceptor in catalysis. Residue glutamate 77 participates in NADP(+) binding. Positions 86 and 102 each coordinate shikimate. NADP(+) contacts are provided by residues 126 to 130, 149 to 154, and methionine 213; these read GAGGA and NRTVSR. Tyrosine 215 provides a ligand contact to shikimate. Glycine 237 provides a ligand contact to NADP(+).

The protein belongs to the shikimate dehydrogenase family. As to quaternary structure, homodimer.

The enzyme catalyses shikimate + NADP(+) = 3-dehydroshikimate + NADPH + H(+). Its pathway is metabolic intermediate biosynthesis; chorismate biosynthesis; chorismate from D-erythrose 4-phosphate and phosphoenolpyruvate: step 4/7. Its function is as follows. Involved in the biosynthesis of the chorismate, which leads to the biosynthesis of aromatic amino acids. Catalyzes the reversible NADPH linked reduction of 3-dehydroshikimate (DHSA) to yield shikimate (SA). This chain is Shikimate dehydrogenase (NADP(+)), found in Shigella sonnei (strain Ss046).